The chain runs to 1051 residues: Outer capsid protein VP2 (1051 aa).

It belongs to the orbivirus VP2 family.

It localises to the virion. The VP2 protein is one of the two proteins (with VP5) which constitute the virus particle outer capsid. It is the major target of the host immunogenic response. This chain is Outer capsid protein VP2 (Segment-2), found in African horse sickness virus (AHSV).